A 378-amino-acid polypeptide reads, in one-letter code: Cell surface mannoprotein MP65 (378 aa).

A signal peptide spans 1-32 (MLFKSFVTFTVLANALAAPLAHQHHQHKEEKR). Residues 67–124 (VSVSVNTEPPQNHPTTTQDVASASTYPSSTDGSAASSSAAASSSSQAGSEPSGGVGSG) form a disordered region. Residues 72 to 93 (NTEPPQNHPTTTQDVASASTYP) show a composition bias toward polar residues. Positions 94-116 (SSTDGSAASSSAAASSSSQAGSE) are enriched in low complexity. The Nucleophile role is filled by glutamate 316.

It belongs to the glycosyl hydrolase 17 family. As to quaternary structure, component of a multiprotein complex of 250 kDa composed of at least HYR1, MP65, and PRA1. Glycosylated protein with a polysaccharide moiety composed exclusively of mannose and glucose at a ratio of 12.7 to 1. Contributes highly to the carbohydrate component of the matrix. Treatment with tunicamycin impairs glycosylation.

It localises to the secreted. It is found in the cell wall. In terms of biological role, surface mannoprotein required for hyphal morphogenesis, surface adherence, and pathogenicity. Contributes in a high proportion to the carbohydrate component of the matrix due to high levels of glycosylation and may play important roles during biofilm development and maintenance. Acts as a major antigen target of host cell-mediated immune response. Induces extensive T-cell proliferation of human peripheral blood mononuclear cells. Facilitates host dendritic cells maturation and promotes cytokine production through its glycosylated portion while its protein core is essentially involved in induction of T-cell response. The protein is Cell surface mannoprotein MP65 (MP65) of Candida albicans (strain SC5314 / ATCC MYA-2876) (Yeast).